Reading from the N-terminus, the 360-residue chain is Photosystem II protein D1 (360 aa).

A run of 3 helical transmembrane segments spans residues 29-46 (YIGW…TATT), 118-133 (HFLL…EWEL), and 142-156 (WIFV…AASA). His-118 contacts chlorophyll a. Tyr-126 is a pheophytin a binding site. Residues Asp-170 and Glu-189 each coordinate [CaMn4O5] cluster. A helical transmembrane segment spans residues 197–218 (FHMAGVAGVFGGSLFSAMHGSL). Position 198 (His-198) interacts with chlorophyll a. A quinone-binding positions include His-215 and 264–265 (SF). Position 215 (His-215) interacts with Fe cation. His-272 contacts Fe cation. Residues 274–288 (FLAAWPVVRIWLTAL) form a helical membrane-spanning segment. Residues His-332, Glu-333, Asp-342, and Ala-344 each contribute to the [CaMn4O5] cluster site. Positions 345-360 (AGEVLPVAVSAPAVHA) are excised as a propeptide.

It belongs to the reaction center PufL/M/PsbA/D family. In terms of assembly, PSII is composed of 1 copy each of membrane proteins PsbA, PsbB, PsbC, PsbD, PsbE, PsbF, PsbH, PsbI, PsbJ, PsbK, PsbL, PsbM, PsbT, PsbX, PsbY, PsbZ, Psb30/Ycf12, at least 3 peripheral proteins of the oxygen-evolving complex and a large number of cofactors. It forms dimeric complexes. Requires The D1/D2 heterodimer binds P680, chlorophylls that are the primary electron donor of PSII, and subsequent electron acceptors. It shares a non-heme iron and each subunit binds pheophytin, quinone, additional chlorophylls, carotenoids and lipids. D1 provides most of the ligands for the Mn4-Ca-O5 cluster of the oxygen-evolving complex (OEC). There is also a Cl(-1) ion associated with D1 and D2, which is required for oxygen evolution. The PSII complex binds additional chlorophylls, carotenoids and specific lipids. as cofactor. In terms of processing, tyr-161 forms a radical intermediate that is referred to as redox-active TyrZ, YZ or Y-Z. Post-translationally, C-terminally processed by CTPA; processing is essential to allow assembly of the oxygen-evolving complex and thus photosynthetic growth.

It is found in the plastid. Its subcellular location is the chloroplast thylakoid membrane. The enzyme catalyses 2 a plastoquinone + 4 hnu + 2 H2O = 2 a plastoquinol + O2. Photosystem II (PSII) is a light-driven water:plastoquinone oxidoreductase that uses light energy to abstract electrons from H(2)O, generating O(2) and a proton gradient subsequently used for ATP formation. It consists of a core antenna complex that captures photons, and an electron transfer chain that converts photonic excitation into a charge separation. The D1/D2 (PsbA/PsbD) reaction center heterodimer binds P680, the primary electron donor of PSII as well as several subsequent electron acceptors. The sequence is that of Photosystem II protein D1 from Bumilleriopsis filiformis (Yellow-green alga).